A 161-amino-acid chain; its full sequence is MPSMDIVSEVNEEELRNAVENSRRELSSRFDFRGKEAEIEHKEFIVTLKAEDDFQCRQLVDILRIQLSKRDVDPSSMEVDDKAIHSGKTFSLKVSFKQGIDSLVAKKLVKQIKDSKLKVQAAIQGDTVRVTGKKRDDLQAVMRLAKESELGQPFQFNNFRD.

It belongs to the YajQ family.

In terms of biological role, nucleotide-binding protein. This chain is Nucleotide-binding protein Sden_0770, found in Shewanella denitrificans (strain OS217 / ATCC BAA-1090 / DSM 15013).